A 362-amino-acid polypeptide reads, in one-letter code: GTP 3',8-cyclase (362 aa).

A Radical SAM core domain is found at 8–228 (SLGRPLRDLR…ARISSHWPID (221 aa)). Residue R17 participates in GTP binding. C24 and C28 together coordinate [4Fe-4S] cluster. Y30 provides a ligand contact to S-adenosyl-L-methionine. C31 is a [4Fe-4S] cluster binding site. Residue R71 coordinates GTP. G75 lines the S-adenosyl-L-methionine pocket. T102 lines the GTP pocket. S126 contacts S-adenosyl-L-methionine. K164 is a GTP binding site. M198 serves as a coordination point for S-adenosyl-L-methionine. Positions 262 and 265 each coordinate [4Fe-4S] cluster. GTP is bound at residue 267–269 (RLR). Position 279 (C279) interacts with [4Fe-4S] cluster. Positions 325 to 362 (ALDSDGSREDADESEASAVPGRSTHPGHRKVEMSYIGG) are disordered.

The protein belongs to the radical SAM superfamily. MoaA family. As to quaternary structure, monomer and homodimer. It depends on [4Fe-4S] cluster as a cofactor.

The catalysed reaction is GTP + AH2 + S-adenosyl-L-methionine = (8S)-3',8-cyclo-7,8-dihydroguanosine 5'-triphosphate + 5'-deoxyadenosine + L-methionine + A + H(+). It participates in cofactor biosynthesis; molybdopterin biosynthesis. In terms of biological role, catalyzes the cyclization of GTP to (8S)-3',8-cyclo-7,8-dihydroguanosine 5'-triphosphate. The polypeptide is GTP 3',8-cyclase (Acidothermus cellulolyticus (strain ATCC 43068 / DSM 8971 / 11B)).